Here is a 334-residue protein sequence, read N- to C-terminus: N-chimaerin (334 aa).

Positions 1-10 (MPSKESWSGR) are enriched in polar residues. The disordered stretch occupies residues 1 to 22 (MPSKESWSGRKTNRATVHKSKQ). Thr67 is modified (phosphothreonine). The Phorbol-ester/DAG-type zinc-finger motif lies at 80–130 (VHNFKVHTFRGPHWCEYCANFMWGLIAQGVKCADCGLNVHKQCSKMVPNDC). Residues 143–334 (CDLTTLVKAH…LLIKNEDILF (192 aa)) form the Rho-GAP domain. Phosphothreonine is present on Thr215.

In terms of assembly, interacts with EPHA4; effector of EPHA4 in axon guidance linking EPHA4 activation to RAC1 regulation. In terms of processing, phosphorylated. Phosphorylation is EPHA4 kinase activity-dependent. As to expression, in neurons in brain regions that are involved in learning and memory processes.

In terms of biological role, GTPase-activating protein for p21-rac and a phorbol ester receptor. Involved in the assembly of neuronal locomotor circuits as a direct effector of EPHA4 in axon guidance. In Rattus norvegicus (Rat), this protein is N-chimaerin (Chn1).